The sequence spans 811 residues: DNA gyrase subunit A (811 aa).

The Topo IIA-type catalytic domain occupies 30-493 (LPDVRDGLKP…LEEDIGKEDL (464 aa)). Tyrosine 118 acts as the O-(5'-phospho-DNA)-tyrosine intermediate in catalysis. Residues 520-526 (QGRGGRG) carry the GyrA-box motif.

This sequence belongs to the type II topoisomerase GyrA/ParC subunit family. As to quaternary structure, heterotetramer, composed of two GyrA and two GyrB chains. In the heterotetramer, GyrA contains the active site tyrosine that forms a transient covalent intermediate with DNA, while GyrB binds cofactors and catalyzes ATP hydrolysis.

Its subcellular location is the cytoplasm. The enzyme catalyses ATP-dependent breakage, passage and rejoining of double-stranded DNA.. In terms of biological role, a type II topoisomerase that negatively supercoils closed circular double-stranded (ds) DNA in an ATP-dependent manner to modulate DNA topology and maintain chromosomes in an underwound state. Negative supercoiling favors strand separation, and DNA replication, transcription, recombination and repair, all of which involve strand separation. Also able to catalyze the interconversion of other topological isomers of dsDNA rings, including catenanes and knotted rings. Type II topoisomerases break and join 2 DNA strands simultaneously in an ATP-dependent manner. The sequence is that of DNA gyrase subunit A from Deinococcus deserti (strain DSM 17065 / CIP 109153 / LMG 22923 / VCD115).